A 212-amino-acid chain; its full sequence is uncharacterized protein (212 aa).

The S-adenosyl-L-methionine site is built by G53, E74, and D97.

This sequence belongs to the methyltransferase superfamily. YrrT family.

In terms of biological role, could be a S-adenosyl-L-methionine-dependent methyltransferase. This is an uncharacterized protein from Bacillus cereus (strain ZK / E33L).